A 1770-amino-acid polypeptide reads, in one-letter code: Probable outer membrane protein PmpC (1770 aa).

The signal sequence occupies residues 1–20; it reads MKFMSATAVFAAALSSVTEA. 5 disordered regions span residues 73-109, 264-311, 481-505, 611-818, and 1271-1329; these read LPRK…ELDN, EDTL…GKGG, PAAP…TNSD, ESTP…STTE, and LRII…TSRT. Positions 85 to 97 are enriched in low complexity; that stretch reads SPTTEGVSSSSSG. Positions 268–285 are enriched in polar residues; that stretch reads DSTPETEQTESNGNQDGS. Composition is skewed to low complexity over residues 294–303 and 496–505; these read SESPESTPSP and QTETSDTNSD. Polar residues-rich tracts occupy residues 631-675 and 682-703; these read TEDP…TGNA and QDST…QSNE. 2 stretches are compositionally biased toward low complexity: residues 719-748 and 762-802; these read ESVS…GDQS and STDS…GDSA. Over residues 1303–1319 the composition is skewed to polar residues; it reads NNDASNQGESANGSSSP. The region spanning 1477–1770 is the Autotransporter domain; sequence EEVSYNNLWI…MMNCGARMTF (294 aa).

It belongs to the PMP outer membrane protein family.

The protein resides in the secreted. It is found in the cell wall. It localises to the cell outer membrane. The protein is Probable outer membrane protein PmpC (pmpC) of Chlamydia trachomatis serovar D (strain ATCC VR-885 / DSM 19411 / UW-3/Cx).